We begin with the raw amino-acid sequence, 500 residues long: L-arabinose isomerase (500 aa).

The Mn(2+) site is built by Glu306, Glu333, His349, and His448.

This sequence belongs to the arabinose isomerase family. It depends on Mn(2+) as a cofactor.

It catalyses the reaction beta-L-arabinopyranose = L-ribulose. It functions in the pathway carbohydrate degradation; L-arabinose degradation via L-ribulose; D-xylulose 5-phosphate from L-arabinose (bacterial route): step 1/3. Its function is as follows. Catalyzes the conversion of L-arabinose to L-ribulose. This chain is L-arabinose isomerase, found in Shewanella sp. (strain MR-7).